A 209-amino-acid polypeptide reads, in one-letter code: Thymidylate kinase (209 aa).

11-18 (GIEGAGKT) is a binding site for ATP.

The protein belongs to the thymidylate kinase family.

The catalysed reaction is dTMP + ATP = dTDP + ADP. In terms of biological role, phosphorylation of dTMP to form dTDP in both de novo and salvage pathways of dTTP synthesis. This chain is Thymidylate kinase (tmk), found in Pasteurella multocida (strain Pm70).